The sequence spans 647 residues: DEAD-box ATP-dependent RNA helicase 18 (647 aa).

Positions 23 to 51 (FSELSPALSPEVVKALKGGGFRRCTPVQA) match the Q motif motif. Residues 54–232 (IPLLLSHKDV…KAGLRNPVRV (179 aa)) enclose the Helicase ATP-binding domain. Residue 67–74 (AATGSGKT) participates in ATP binding. Residues 180 to 183 (DEAD) carry the DEAD box motif. Residues 274–430 (QLVDFLVQNN…DIVPQIRSAA (157 aa)) form the Helicase C-terminal domain. Positions 507-582 (KYKDKAREKQ…RLLKKLKRGV (76 aa)) form a coiled coil. The segment covering 512 to 545 (AREKQRQKTLKRKAEELALRPEIEKRRKAPEKPE) has biased composition (basic and acidic residues). Disordered regions lie at residues 512–565 (AREK…KEDM) and 590–647 (KLTG…TRRR). The span at 596-610 (ESDDDDSSDGGDSDL) shows a compositional bias: acidic residues. Residues 619-633 (KVLKKIKQKGKAKGS) show a composition bias toward basic residues.

The protein belongs to the DEAD box helicase family. DDX55/SPB4 subfamily. As to quaternary structure, interacts with BRI1. Phosphorylated.

The enzyme catalyses ATP + H2O = ADP + phosphate + H(+). In Oryza sativa subsp. japonica (Rice), this protein is DEAD-box ATP-dependent RNA helicase 18.